The sequence spans 367 residues: Serine/threonine-protein kinase Sgk2 (367 aa).

Residues 1-26 (MNSSPAGTPSPQPSRANGNINLGPSA) form a disordered region. Ser-10 bears the Phosphoserine mark. Positions 35–292 (FDFLKVIGKG…FLEIKNHVFF (258 aa)) constitute a Protein kinase domain. ATP-binding positions include 41–49 (IGKGNYGKV) and Lys-64. The Nuclear localization signal motif lies at 68–78 (KKSILKKKEQS). Asp-159 functions as the Proton acceptor in the catalytic mechanism. Thr-193 is subject to Phosphothreonine; by PDPK1. Residues 293 to 367 (SPINWDDLYH…APEDDDILDC (75 aa)) form the AGC-kinase C-terminal domain. A phosphoserine mark is found at Ser-334 and Ser-356. Residue Tyr-357 is modified to Phosphotyrosine.

Belongs to the protein kinase superfamily. AGC Ser/Thr protein kinase family. In terms of processing, activated by phosphorylation on Ser-356 by an unknown kinase (may be mTORC2 but not confirmed), transforming it into a substrate for PDPK1 which then phosphorylates it on Thr-193. In terms of tissue distribution, highly expressed in liver, kidney and pancreas, and at lower levels in brain.

It is found in the cytoplasm. The protein localises to the nucleus. The enzyme catalyses L-seryl-[protein] + ATP = O-phospho-L-seryl-[protein] + ADP + H(+). The catalysed reaction is L-threonyl-[protein] + ATP = O-phospho-L-threonyl-[protein] + ADP + H(+). Its activity is regulated as follows. Two specific sites, one in the kinase domain (Thr-193) and the other in the C-terminal regulatory region (Ser-356), need to be phosphorylated for its full activation. Serine/threonine-protein kinase which is involved in the regulation of a wide variety of ion channels, membrane transporters, cell growth, survival and proliferation. Up-regulates Na(+) channels: SCNN1A/ENAC, K(+) channels: KCNA3/Kv1.3, KCNE1 and KCNQ1, amino acid transporter: SLC6A19, glutamate transporter: SLC1A6/EAAT4, glutamate receptors: GRIA1/GLUR1 and GRIK2/GLUR6, Na(+)/H(+) exchanger: SLC9A3/NHE3, and the Na(+)/K(+) ATPase. The sequence is that of Serine/threonine-protein kinase Sgk2 (SGK2) from Homo sapiens (Human).